A 652-amino-acid polypeptide reads, in one-letter code: DNA ligase (652 aa).

NAD(+)-binding positions include 29–33 (DSDYD), 78–79 (SL), and Glu107. The N6-AMP-lysine intermediate role is filled by Lys109. The NAD(+) site is built by Arg130, Glu164, Lys278, and Lys302. 4 residues coordinate Zn(2+): Cys395, Cys398, Cys413, and Cys418. Residues 577–652 (NSDAALFGLT…IEDEDWLRQL (76 aa)) enclose the BRCT domain.

The protein belongs to the NAD-dependent DNA ligase family. LigA subfamily. Mg(2+) is required as a cofactor. It depends on Mn(2+) as a cofactor.

It catalyses the reaction NAD(+) + (deoxyribonucleotide)n-3'-hydroxyl + 5'-phospho-(deoxyribonucleotide)m = (deoxyribonucleotide)n+m + AMP + beta-nicotinamide D-nucleotide.. DNA ligase that catalyzes the formation of phosphodiester linkages between 5'-phosphoryl and 3'-hydroxyl groups in double-stranded DNA using NAD as a coenzyme and as the energy source for the reaction. It is essential for DNA replication and repair of damaged DNA. The protein is DNA ligase of Streptococcus pyogenes serotype M1.